The sequence spans 239 residues: Orotidine 5'-phosphate decarboxylase (239 aa).

Residues aspartate 15, lysine 37, 64 to 73, threonine 126, arginine 187, glutamine 196, glycine 216, and arginine 217 each bind substrate; that span reads DLKYHDIPNT. The Proton donor role is filled by lysine 66.

Belongs to the OMP decarboxylase family. Type 1 subfamily. As to quaternary structure, homodimer.

The enzyme catalyses orotidine 5'-phosphate + H(+) = UMP + CO2. It participates in pyrimidine metabolism; UMP biosynthesis via de novo pathway; UMP from orotate: step 2/2. Its function is as follows. Catalyzes the decarboxylation of orotidine 5'-monophosphate (OMP) to uridine 5'-monophosphate (UMP). The sequence is that of Orotidine 5'-phosphate decarboxylase from Geotalea daltonii (strain DSM 22248 / JCM 15807 / FRC-32) (Geobacter daltonii).